The following is a 263-amino-acid chain: Ycf3-interacting protein 1, chloroplastic (263 aa).

A chloroplast-targeting transit peptide spans Met1–Tyr71. The chain crosses the membrane as a helical span at residues Ala238 to Phe258.

This sequence belongs to the Y3IP1/CEST family. Interacts with Ycf3.

The protein localises to the plastid. Its subcellular location is the chloroplast thylakoid membrane. Functionally, nuclear genome-encoded factor that participates in photosystem I (PSI) biogenesis. Cooperates with the plastid genome-encoded protein PSI assembly Ycf3 in the assembly of stable PSI units in the thylakoid membrane. This Nicotiana tabacum (Common tobacco) protein is Ycf3-interacting protein 1, chloroplastic.